Consider the following 77-residue polypeptide: ATP synthase subunit c (77 aa).

Helical transmembrane passes span 10–30 (IAVA…FGNM) and 57–77 (GLID…LFVL).

It belongs to the ATPase C chain family. As to quaternary structure, F-type ATPases have 2 components, F(1) - the catalytic core - and F(0) - the membrane proton channel. F(1) has five subunits: alpha(3), beta(3), gamma(1), delta(1), epsilon(1). F(0) has three main subunits: a(1), b(2) and c(10-14). The alpha and beta chains form an alternating ring which encloses part of the gamma chain. F(1) is attached to F(0) by a central stalk formed by the gamma and epsilon chains, while a peripheral stalk is formed by the delta and b chains.

It localises to the cell inner membrane. Its function is as follows. F(1)F(0) ATP synthase produces ATP from ADP in the presence of a proton or sodium gradient. F-type ATPases consist of two structural domains, F(1) containing the extramembraneous catalytic core and F(0) containing the membrane proton channel, linked together by a central stalk and a peripheral stalk. During catalysis, ATP synthesis in the catalytic domain of F(1) is coupled via a rotary mechanism of the central stalk subunits to proton translocation. Key component of the F(0) channel; it plays a direct role in translocation across the membrane. A homomeric c-ring of between 10-14 subunits forms the central stalk rotor element with the F(1) delta and epsilon subunits. The protein is ATP synthase subunit c of Pseudoalteromonas translucida (strain TAC 125).